Reading from the N-terminus, the 358-residue chain is Chitin synthase export chaperone (358 aa).

Transmembrane regions (helical) follow at residues 49–69, 88–108, 117–137, 159–179, 185–205, 220–240, and 250–270; these read IIFQ…TVVM, FFYL…GVIP, FVAV…INGF, FVAF…WAGL, VGIF…YVVM, LGDI…LYAF, and HYLD…MMVY. The interval 321-358 is disordered; that stretch reads ASGPGTGSGASASGYEGGHHRRESHGYTPSPNRQSLRY. Over residues 347–358 the composition is skewed to polar residues; sequence YTPSPNRQSLRY.

The protein belongs to the CHS7 family. Interacts with chs-3.

It localises to the endoplasmic reticulum membrane. Functionally, chaperone required for the export of the chitin synthase chs-3 from the endoplasmic reticulum. In Neurospora crassa (strain ATCC 24698 / 74-OR23-1A / CBS 708.71 / DSM 1257 / FGSC 987), this protein is Chitin synthase export chaperone (csc-1).